A 242-amino-acid polypeptide reads, in one-letter code: Probable transcriptional regulatory protein Bphyt_1301 (242 aa).

This sequence belongs to the TACO1 family.

The protein resides in the cytoplasm. The sequence is that of Probable transcriptional regulatory protein Bphyt_1301 from Paraburkholderia phytofirmans (strain DSM 17436 / LMG 22146 / PsJN) (Burkholderia phytofirmans).